Here is a 234-residue protein sequence, read N- to C-terminus: tRNA (guanine-N(1)-)-methyltransferase (234 aa).

S-adenosyl-L-methionine contacts are provided by residues G112 and I132–L137.

This sequence belongs to the RNA methyltransferase TrmD family. As to quaternary structure, homodimer.

Its subcellular location is the cytoplasm. It catalyses the reaction guanosine(37) in tRNA + S-adenosyl-L-methionine = N(1)-methylguanosine(37) in tRNA + S-adenosyl-L-homocysteine + H(+). Specifically methylates guanosine-37 in various tRNAs. This is tRNA (guanine-N(1)-)-methyltransferase from Campylobacter jejuni (strain RM1221).